Here is a 301-residue protein sequence, read N- to C-terminus: Putative S-adenosyl-L-methionine-dependent methyltransferase MT0851 (301 aa).

S-adenosyl-L-methionine is bound by residues Asp-127 and 156-157 (DL).

It belongs to the UPF0677 family.

Functionally, exhibits S-adenosyl-L-methionine-dependent methyltransferase activity. The chain is Putative S-adenosyl-L-methionine-dependent methyltransferase MT0851 from Mycobacterium tuberculosis (strain CDC 1551 / Oshkosh).